The following is a 689-amino-acid chain: DNA-directed RNA polymerase subunit beta' (689 aa).

Positions 76, 78, 94, and 97 each coordinate Zn(2+). 3 residues coordinate Mg(2+): aspartate 496, aspartate 498, and aspartate 500.

The protein belongs to the RNA polymerase beta' chain family. RpoC1 subfamily. As to quaternary structure, in plastids the minimal PEP RNA polymerase catalytic core is composed of four subunits: alpha, beta, beta', and beta''. When a (nuclear-encoded) sigma factor is associated with the core the holoenzyme is formed, which can initiate transcription. The cofactor is Mg(2+). Zn(2+) serves as cofactor.

The protein localises to the plastid. It is found in the chloroplast. It carries out the reaction RNA(n) + a ribonucleoside 5'-triphosphate = RNA(n+1) + diphosphate. In terms of biological role, DNA-dependent RNA polymerase catalyzes the transcription of DNA into RNA using the four ribonucleoside triphosphates as substrates. This is DNA-directed RNA polymerase subunit beta' from Illicium oligandrum (Star anise).